A 766-amino-acid chain; its full sequence is Probable serine/threonine-protein kinase KKQ8 (766 aa).

5 disordered regions span residues 1-165, 201-240, 277-297, 362-384, and 417-437; these read MPEH…DTSS, GHYA…AAQL, SDAN…LDLP, TRSH…DDPS, and AAKN…AGVQ. A compositionally biased stretch (low complexity) spans 14 to 25; it reads RSLSLGSSMRSL. Residues 49–64 show a composition bias toward basic and acidic residues; that stretch reads VDIRVDTASASREHTP. A compositionally biased stretch (polar residues) spans 94-120; sequence LTPTNSNPQSKSGSPVSQNTSQESLIT. Residues 127-137 show a composition bias toward basic and acidic residues; sequence EDYRPSKDSRR. Composition is skewed to polar residues over residues 140–165 and 214–223; these read RNAS…DTSS and PTSSRVPSRS. Positions 288–297 are enriched in basic and acidic residues; sequence SKNDGHLDLP. The segment covering 372 to 382 has biased composition (acidic residues); sequence DSSDDDEELDD. A compositionally biased stretch (basic residues) spans 419 to 430; sequence KNKHNQSSKHRT. Residues 449 to 752 enclose the Protein kinase domain; the sequence is GKCVAVVGHG…IDKLLQTGWM (304 aa). Residues 455–463 and Lys-493 contribute to the ATP site; that span reads VGHGAYGVV. Catalysis depends on Asp-603, which acts as the Proton acceptor.

This sequence belongs to the protein kinase superfamily. CAMK Ser/Thr protein kinase family. NPR/HAL subfamily. HAL5 sub-subfamily.

Its subcellular location is the cytoplasm. It catalyses the reaction L-seryl-[protein] + ATP = O-phospho-L-seryl-[protein] + ADP + H(+). The catalysed reaction is L-threonyl-[protein] + ATP = O-phospho-L-threonyl-[protein] + ADP + H(+). In Candida glabrata (strain ATCC 2001 / BCRC 20586 / JCM 3761 / NBRC 0622 / NRRL Y-65 / CBS 138) (Yeast), this protein is Probable serine/threonine-protein kinase KKQ8 (KKQ8).